The chain runs to 248 residues: PF03932 family protein CutC (248 aa).

This sequence belongs to the CutC family. As to quaternary structure, homodimer.

The protein resides in the cytoplasm. This Salmonella newport (strain SL254) protein is PF03932 family protein CutC.